Consider the following 274-residue polypeptide: 2,3,4,5-tetrahydropyridine-2,6-dicarboxylate N-succinyltransferase (274 aa).

Substrate is bound by residues arginine 104 and aspartate 141.

This sequence belongs to the transferase hexapeptide repeat family. As to quaternary structure, homotrimer.

Its subcellular location is the cytoplasm. The catalysed reaction is (S)-2,3,4,5-tetrahydrodipicolinate + succinyl-CoA + H2O = (S)-2-succinylamino-6-oxoheptanedioate + CoA. Its pathway is amino-acid biosynthesis; L-lysine biosynthesis via DAP pathway; LL-2,6-diaminopimelate from (S)-tetrahydrodipicolinate (succinylase route): step 1/3. The sequence is that of 2,3,4,5-tetrahydropyridine-2,6-dicarboxylate N-succinyltransferase from Escherichia coli O139:H28 (strain E24377A / ETEC).